We begin with the raw amino-acid sequence, 82 residues long: Colonization factor (82 aa).

A signal peptide spans 1-33 (MFSSLKNKLNTFKSTLSLGVFLLFSAFANQALA).

It localises to the secreted. The polypeptide is Colonization factor (cep) (Vibrio cholerae serotype O1 (strain ATCC 39315 / El Tor Inaba N16961)).